We begin with the raw amino-acid sequence, 157 residues long: Ubiquitin-like protein 4A (157 aa).

The Ubiquitin-like domain occupies 1-76 (MQLTVKALQG…LNLVVKPLEK (76 aa)). Residue lysine 48 forms a Glycyl lysine isopeptide (Lys-Gly) (interchain with G-Cter in ubiquitin) linkage. Serine 90 is subject to Phosphoserine. Residues 96 to 138 (WHLISKVLARHFSAADASRVLEQLQRDYERSLSRLTLDDIERL) form a required and sufficient for interaction with BAG6 region.

Component of the BAG6/BAT3 complex, at least composed of BAG6, UBL4A and GET4/TRC35. Interacts with BAG6; the interaction is direct and required for UBL4A protein stability. Interacts with USP13; may be indirect via BAG6. In terms of processing, polyubiquitinated. Ubiquitination by AMFR and deubiquitination by USP13 may regulate the interaction between the BAG6/BAT3 complex and SGTA and therefore may regulate client proteins fate.

The protein localises to the cytoplasm. Its subcellular location is the cytosol. It localises to the nucleus. In terms of biological role, as part of a cytosolic protein quality control complex, the BAG6/BAT3 complex, maintains misfolded and hydrophobic patches-containing proteins in a soluble state and participates in their proper delivery to the endoplasmic reticulum or alternatively can promote their sorting to the proteasome where they undergo degradation. The BAG6/BAT3 complex is involved in the post-translational delivery of tail-anchored/type II transmembrane proteins to the endoplasmic reticulum membrane. Recruited to ribosomes, it interacts with the transmembrane region of newly synthesized tail-anchored proteins and together with SGTA and ASNA1 mediates their delivery to the endoplasmic reticulum. Client proteins that cannot be properly delivered to the endoplasmic reticulum are ubiquitinated and sorted to the proteasome. Similarly, the BAG6/BAT3 complex also functions as a sorting platform for proteins of the secretory pathway that are mislocalized to the cytosol either delivering them to the proteasome for degradation or to the endoplasmic reticulum. The BAG6/BAT3 complex also plays a role in the endoplasmic reticulum-associated degradation (ERAD), a quality control mechanism that eliminates unwanted proteins of the endoplasmic reticulum through their retrotranslocation to the cytosol and their targeting to the proteasome. It maintains these retrotranslocated proteins in an unfolded yet soluble state condition in the cytosol to ensure their proper delivery to the proteasome. In Oryctolagus cuniculus (Rabbit), this protein is Ubiquitin-like protein 4A (UBL4A).